The chain runs to 132 residues: Small ribosomal subunit protein uS8 (132 aa).

Belongs to the universal ribosomal protein uS8 family. Part of the 30S ribosomal subunit. Contacts proteins S5 and S12.

Its function is as follows. One of the primary rRNA binding proteins, it binds directly to 16S rRNA central domain where it helps coordinate assembly of the platform of the 30S subunit. The chain is Small ribosomal subunit protein uS8 from Mycobacterium leprae (strain Br4923).